The primary structure comprises 396 residues: Elongation factor Tu (396 aa).

In terms of domain architecture, tr-type G spans 10 to 206 (KPHCNIGTIG…AVDAYIPQPE (197 aa)). The tract at residues 19-26 (GHVDHGKT) is G1. 19-26 (GHVDHGKT) is a GTP binding site. Residue T26 participates in Mg(2+) binding. The G2 stretch occupies residues 60–64 (GITIS). The G3 stretch occupies residues 81-84 (DCPG). Residues 81–85 (DCPGH) and 136–139 (NKCD) each bind GTP. The G4 stretch occupies residues 136-139 (NKCD). The G5 stretch occupies residues 174–176 (SAL).

The protein belongs to the TRAFAC class translation factor GTPase superfamily. Classic translation factor GTPase family. EF-Tu/EF-1A subfamily. As to quaternary structure, monomer.

It localises to the cytoplasm. The catalysed reaction is GTP + H2O = GDP + phosphate + H(+). In terms of biological role, GTP hydrolase that promotes the GTP-dependent binding of aminoacyl-tRNA to the A-site of ribosomes during protein biosynthesis. The protein is Elongation factor Tu of Nitrobacter hamburgensis (strain DSM 10229 / NCIMB 13809 / X14).